The following is a 283-amino-acid chain: Elongation factor Ts (283 aa).

The segment at 79-82 (TDFV) is involved in Mg(2+) ion dislocation from EF-Tu.

Belongs to the EF-Ts family.

It is found in the cytoplasm. Its function is as follows. Associates with the EF-Tu.GDP complex and induces the exchange of GDP to GTP. It remains bound to the aminoacyl-tRNA.EF-Tu.GTP complex up to the GTP hydrolysis stage on the ribosome. In Shewanella amazonensis (strain ATCC BAA-1098 / SB2B), this protein is Elongation factor Ts.